The chain runs to 1151 residues: Cation channel sperm-associated protein subunit gamma 1 (1151 aa).

Residues 1-38 (MVSRPAMSPVSPVWPRKPNLWAFWVLRLVLLLSLKSWA) form the signal peptide. Residues 39–1063 (EDTLQHCTWL…GLPLSSKRSS (1025 aa)) lie on the Extracellular side of the membrane. Asn-356 carries an N-linked (GlcNAc...) asparagine glycan. The chain crosses the membrane as a helical span at residues 1064-1084 (FIVMVSTSFFIALVVFYILFC). Topologically, residues 1085–1151 (LVWPHIVKAW…NVQAKRAKVA (67 aa)) are cytoplasmic. Low complexity predominate over residues 1113–1123 (SSSSGGFTLHS). The interval 1113–1151 (SSSSGGFTLHSHSSEGSFEGPSRPGTKEDNVQAKRAKVA) is disordered.

Belongs to the CATSPERG family.

Its subcellular location is the membrane. The sequence is that of Cation channel sperm-associated protein subunit gamma 1 (Catsperg1) from Mus musculus (Mouse).